The primary structure comprises 197 residues: Superoxide dismutase [Fe] (197 aa).

4 residues coordinate Fe cation: histidine 26, histidine 75, aspartate 157, and histidine 161.

The protein belongs to the iron/manganese superoxide dismutase family. Homotetramer. Fe cation is required as a cofactor.

The catalysed reaction is 2 superoxide + 2 H(+) = H2O2 + O2. Functionally, destroys superoxide anion radicals which are normally produced within the cells and which are toxic to biological systems. The chain is Superoxide dismutase [Fe] from Cupriavidus metallidurans (strain ATCC 43123 / DSM 2839 / NBRC 102507 / CH34) (Ralstonia metallidurans).